Here is a 143-residue protein sequence, read N- to C-terminus: Small ribosomal subunit protein uS12 (143 aa).

Basic residues predominate over residues 1-20 (MGKCRGLRTARKLRSHRRDH). The segment at 1–26 (MGKCRGLRTARKLRSHRRDHKWHDKQ) is disordered. A Glycyl lysine isopeptide (Lys-Gly) (interchain with G-Cter in SUMO2) cross-link involves residue K37. Residue K54 is modified to N6-succinyllysine. 3-hydroxyproline is present on P62. K135 bears the N6-acetyllysine mark.

The protein belongs to the universal ribosomal protein uS12 family. As to quaternary structure, component of the 40S small ribosomal subunit. Part of the small subunit (SSU) processome, composed of more than 70 proteins and the RNA chaperone small nucleolar RNA (snoRNA) U3. In terms of assembly, (Microbial infection) Interacts with the African swine fever virus (ASFV) ubiquitin-conjugating enzyme UBCv1; this interaction probably plays a role in the viral regulation of host protein synthesis. Hydroxylation at Pro-62 affects translation termination efficiency.

It is found in the cytoplasm. The protein localises to the cytosol. It localises to the rough endoplasmic reticulum. Its subcellular location is the nucleus. The protein resides in the nucleolus. In terms of biological role, component of the ribosome, a large ribonucleoprotein complex responsible for the synthesis of proteins in the cell. The small ribosomal subunit (SSU) binds messenger RNAs (mRNAs) and translates the encoded message by selecting cognate aminoacyl-transfer RNA (tRNA) molecules. The large subunit (LSU) contains the ribosomal catalytic site termed the peptidyl transferase center (PTC), which catalyzes the formation of peptide bonds, thereby polymerizing the amino acids delivered by tRNAs into a polypeptide chain. The nascent polypeptides leave the ribosome through a tunnel in the LSU and interact with protein factors that function in enzymatic processing, targeting, and the membrane insertion of nascent chains at the exit of the ribosomal tunnel. Plays an important role in translational accuracy. Part of the small subunit (SSU) processome, first precursor of the small eukaryotic ribosomal subunit. During the assembly of the SSU processome in the nucleolus, many ribosome biogenesis factors, an RNA chaperone and ribosomal proteins associate with the nascent pre-rRNA and work in concert to generate RNA folding, modifications, rearrangements and cleavage as well as targeted degradation of pre-ribosomal RNA by the RNA exosome. The sequence is that of Small ribosomal subunit protein uS12 (RPS23) from Sus scrofa (Pig).